Reading from the N-terminus, the 603-residue chain is Elongation factor 4 (603 aa).

One can recognise a tr-type G domain in the interval Ser-7–Ala-189. GTP is bound by residues Asp-19–Thr-24 and Asn-136–Asp-139.

This sequence belongs to the TRAFAC class translation factor GTPase superfamily. Classic translation factor GTPase family. LepA subfamily.

It is found in the cell inner membrane. It catalyses the reaction GTP + H2O = GDP + phosphate + H(+). Functionally, required for accurate and efficient protein synthesis under certain stress conditions. May act as a fidelity factor of the translation reaction, by catalyzing a one-codon backward translocation of tRNAs on improperly translocated ribosomes. Back-translocation proceeds from a post-translocation (POST) complex to a pre-translocation (PRE) complex, thus giving elongation factor G a second chance to translocate the tRNAs correctly. Binds to ribosomes in a GTP-dependent manner. The sequence is that of Elongation factor 4 from Synechocystis sp. (strain ATCC 27184 / PCC 6803 / Kazusa).